Reading from the N-terminus, the 310-residue chain is MDKIFVDEAVNELHTIQDMLRWTVSRFNAANIFYGHGTDNPWDEAVQLVFPSLFLPLDIPEDIRSSRLTSSERHRIVERVIRRVNERIPVAYLTNKAWFCGMEYYVDERVLVPRSPIGELIENRFDGLIHHQPNHILDMCTGSGCIAIACAYAFPDAEVDAVDISNDVLAVTEHNIQQHGMEHQVTPIRSDLFRDLPPIKYDLIVTNPPYVDAEDMADLPQEFRFEPELGLAAGSDGLKLARRILACAPDFLQDDGVLICEVGNSMVHLMDQYPDVPFTWLEFEKGGDGVFMLTKQQLIDCAAHFSMYRD.

Belongs to the protein N5-glutamine methyltransferase family. PrmB subfamily.

It catalyses the reaction L-glutaminyl-[ribosomal protein uL3] + S-adenosyl-L-methionine = N(5)-methyl-L-glutaminyl-[ribosomal protein uL3] + S-adenosyl-L-homocysteine + H(+). Its function is as follows. Methylates large ribosomal subunit protein uL3 on a specific glutamine residue. The sequence is that of Ribosomal protein uL3 glutamine methyltransferase from Yersinia pestis.